We begin with the raw amino-acid sequence, 358 residues long: Membrane-bound lytic murein transglycosylase C (358 aa).

The N-terminal stretch at 1-19 (MKITLKKLLILAIVPFLYA) is a signal peptide. The N-palmitoyl cysteine moiety is linked to residue Cys20. Cys20 carries S-diacylglycerol cysteine lipidation.

Belongs to the transglycosylase Slt family.

It localises to the cell outer membrane. It catalyses the reaction Exolytic cleavage of the (1-&gt;4)-beta-glycosidic linkage between N-acetylmuramic acid (MurNAc) and N-acetylglucosamine (GlcNAc) residues in peptidoglycan, from either the reducing or the non-reducing ends of the peptidoglycan chains, with concomitant formation of a 1,6-anhydrobond in the MurNAc residue.. Murein-degrading enzyme. May play a role in recycling of muropeptides during cell elongation and/or cell division. This Actinobacillus succinogenes (strain ATCC 55618 / DSM 22257 / CCUG 43843 / 130Z) protein is Membrane-bound lytic murein transglycosylase C.